We begin with the raw amino-acid sequence, 78 residues long: UPF0401 protein YubL (78 aa).

Belongs to the UPF0401 family.

The sequence is that of UPF0401 protein YubL (yubL) from Salmonella typhi.